We begin with the raw amino-acid sequence, 201 residues long: Inosine triphosphate pyrophosphatase (201 aa).

13–18 contributes to the ITP binding site; it reads TGNAKK. Glutamate 43 lines the Mg(2+) pocket. Residues lysine 55, 71–72, lysine 88, 148–151, lysine 171, and 176–177 each bind ITP; these read DT, FGWD, and HR.

It belongs to the HAM1 NTPase family. Homodimer. Mg(2+) serves as cofactor. It depends on Mn(2+) as a cofactor.

Its subcellular location is the cytoplasm. It catalyses the reaction ITP + H2O = IMP + diphosphate + H(+). The enzyme catalyses dITP + H2O = dIMP + diphosphate + H(+). The catalysed reaction is XTP + H2O = XMP + diphosphate + H(+). It carries out the reaction N(6)-hydroxy-dATP + H2O = N(6)-hydroxy-dAMP + diphosphate + H(+). Pyrophosphatase that hydrolyzes the non-canonical purine nucleotides inosine triphosphate (ITP), deoxyinosine triphosphate (dITP) as well as 2'-deoxy-N-6-hydroxylaminopurine triphosphate (dHAPTP) and xanthosine 5'-triphosphate (XTP) to their respective monophosphate derivatives. The enzyme does not distinguish between the deoxy- and ribose forms. Probably excludes non-canonical purines from RNA and DNA precursor pools, thus preventing their incorporation into RNA and DNA and avoiding chromosomal lesions. The sequence is that of Inosine triphosphate pyrophosphatase from Gallus gallus (Chicken).